We begin with the raw amino-acid sequence, 302 residues long: Dihydroorotate dehydrogenase B (NAD(+)), catalytic subunit (302 aa).

FMN is bound by residues Ser-20 and 44-45; that span reads KG. Substrate contacts are provided by residues Lys-44 and 68–72; that span reads NSVGL. FMN-binding residues include Asn-98 and Asn-125. Residue Asn-125 coordinates substrate. The Nucleophile role is filled by Cys-128. The FMN site is built by Lys-163 and Ile-189. Residue 190-191 participates in substrate binding; the sequence is NT. FMN contacts are provided by residues Gly-215, 241-242, and 263-264; these read GG and GT.

It belongs to the dihydroorotate dehydrogenase family. Type 1 subfamily. As to quaternary structure, heterotetramer of 2 PyrK and 2 PyrD type B subunits. It depends on FMN as a cofactor.

The protein localises to the cytoplasm. It catalyses the reaction (S)-dihydroorotate + NAD(+) = orotate + NADH + H(+). It functions in the pathway pyrimidine metabolism; UMP biosynthesis via de novo pathway; orotate from (S)-dihydroorotate (NAD(+) route): step 1/1. Catalyzes the conversion of dihydroorotate to orotate with NAD(+) as electron acceptor. The chain is Dihydroorotate dehydrogenase B (NAD(+)), catalytic subunit (pyrD) from Thermoanaerobacter pseudethanolicus (strain ATCC 33223 / 39E) (Clostridium thermohydrosulfuricum).